Reading from the N-terminus, the 95-residue chain is Large ribosomal subunit protein uL23 (95 aa).

It belongs to the universal ribosomal protein uL23 family. As to quaternary structure, part of the 50S ribosomal subunit. Contacts protein L29, and trigger factor when it is bound to the ribosome.

In terms of biological role, one of the early assembly proteins it binds 23S rRNA. One of the proteins that surrounds the polypeptide exit tunnel on the outside of the ribosome. Forms the main docking site for trigger factor binding to the ribosome. The sequence is that of Large ribosomal subunit protein uL23 from Pediococcus pentosaceus (strain ATCC 25745 / CCUG 21536 / LMG 10740 / 183-1w).